The chain runs to 223 residues: Small ribosomal subunit protein uS3 (223 aa).

Residues I39–K108 form the KH type-2 domain.

The protein belongs to the universal ribosomal protein uS3 family. In terms of assembly, part of the 30S ribosomal subunit. Forms a tight complex with proteins S10 and S14.

Functionally, binds the lower part of the 30S subunit head. Binds mRNA in the 70S ribosome, positioning it for translation. In Clostridium botulinum (strain 657 / Type Ba4), this protein is Small ribosomal subunit protein uS3.